A 199-amino-acid chain; its full sequence is Small heat shock protein hspG4 (199 aa).

The 170-residue stretch at 30 to 199 (NKRVDIIPSM…SSNTIKININ (170 aa)) folds into the sHSP domain. Residues 83–105 (KNQQQQQQQQQLENSNNKENDEP) are disordered.

Belongs to the small heat shock protein (HSP20) family.

The sequence is that of Small heat shock protein hspG4 (hspG4) from Dictyostelium discoideum (Social amoeba).